Here is a 332-residue protein sequence, read N- to C-terminus: Spherulin-4 (332 aa).

Positions 1–22 (MNIKIVVLVIFAILLGSALAWH) are cleaved as a signal peptide. Positions 26–60 (HHNPTKAPTEAPHRGGGGGGGHNTPAPTQPPRQNT) are disordered.

This chain is Spherulin-4, found in Physarum polycephalum (Slime mold).